The sequence spans 209 residues: Thiamine-phosphate synthase (209 aa).

4-amino-2-methyl-5-(diphosphooxymethyl)pyrimidine-binding positions include 38–42 (QLREK) and Asn70. Positions 71 and 90 each coordinate Mg(2+). 4-amino-2-methyl-5-(diphosphooxymethyl)pyrimidine is bound at residue Ser109. Position 135-137 (135-137 (TPT)) interacts with 2-[(2R,5Z)-2-carboxy-4-methylthiazol-5(2H)-ylidene]ethyl phosphate. Lys138 contributes to the 4-amino-2-methyl-5-(diphosphooxymethyl)pyrimidine binding site. 2-[(2R,5Z)-2-carboxy-4-methylthiazol-5(2H)-ylidene]ethyl phosphate is bound by residues Gly166 and 186–187 (IS).

The protein belongs to the thiamine-phosphate synthase family. Mg(2+) is required as a cofactor.

It catalyses the reaction 2-[(2R,5Z)-2-carboxy-4-methylthiazol-5(2H)-ylidene]ethyl phosphate + 4-amino-2-methyl-5-(diphosphooxymethyl)pyrimidine + 2 H(+) = thiamine phosphate + CO2 + diphosphate. The enzyme catalyses 2-(2-carboxy-4-methylthiazol-5-yl)ethyl phosphate + 4-amino-2-methyl-5-(diphosphooxymethyl)pyrimidine + 2 H(+) = thiamine phosphate + CO2 + diphosphate. It carries out the reaction 4-methyl-5-(2-phosphooxyethyl)-thiazole + 4-amino-2-methyl-5-(diphosphooxymethyl)pyrimidine + H(+) = thiamine phosphate + diphosphate. It functions in the pathway cofactor biosynthesis; thiamine diphosphate biosynthesis; thiamine phosphate from 4-amino-2-methyl-5-diphosphomethylpyrimidine and 4-methyl-5-(2-phosphoethyl)-thiazole: step 1/1. Its function is as follows. Condenses 4-methyl-5-(beta-hydroxyethyl)thiazole monophosphate (THZ-P) and 2-methyl-4-amino-5-hydroxymethyl pyrimidine pyrophosphate (HMP-PP) to form thiamine monophosphate (TMP). The sequence is that of Thiamine-phosphate synthase from Syntrophomonas wolfei subsp. wolfei (strain DSM 2245B / Goettingen).